Reading from the N-terminus, the 724-residue chain is Probable methyltransferase PMT28 (724 aa).

The Cytoplasmic portion of the chain corresponds to 1 to 22 (MMERKREMGIAYFARRIKQPRG). A helical; Signal-anchor for type II membrane protein transmembrane segment spans residues 23–43 (IWVKMTFIVVLGLCFVFFWSF). At 44–724 (LSSSASTFNV…LCAQKTLWRP (681 aa)) the chain is on the lumenal side. The tract at residues 63–211 (EPVSSRTKSA…ISKKRKRKGP (149 aa)) is disordered. Residues 71-98 (SAHEVSESSKLHERGKVESGSKSKEGKK) show a composition bias toward basic and acidic residues. Residues 107-125 (HETKKKKEHAVSHPHKKKD) are compositionally biased toward basic residues. Over residues 126–140 (VPKPVVEEVVVKEDQ) the composition is skewed to basic and acidic residues. Residues 141–173 (EHEEAESDDSDQSNKEDGEEGTESDGNEGESDG) show a composition bias toward acidic residues. Residues N305, N316, and N568 are each glycosylated (N-linked (GlcNAc...) asparagine).

The protein belongs to the methyltransferase superfamily.

It is found in the golgi apparatus membrane. The chain is Probable methyltransferase PMT28 from Arabidopsis thaliana (Mouse-ear cress).